The chain runs to 788 residues: Auxin response factor 4 (788 aa).

The segment covering 1 to 19 has biased composition (acidic residues); sequence MEFDLNTEIAEVEEEENDD. The disordered stretch occupies residues 1–53; sequence MEFDLNTEIAEVEEEENDDVGVGVGGGTRIDKGRLGISPSSSSSCSSGSSSSS. A compositionally biased stretch (low complexity) spans 38–53; sequence SPSSSSSCSSGSSSSS. The segment at residues 177–279 is a DNA-binding region (TF-B3); sequence FCKTLTASDT…ELRLGIRRAA (103 aa). The disordered stretch occupies residues 413-433; that stretch reads LSIQSSPRPKRPWAGLLDTTP. One can recognise a PB1 domain in the interval 665–747; it reads RICTKVHKQG…VVWKIHLYTK (83 aa).

Belongs to the ARF family. In terms of assembly, homodimers and heterodimers. In terms of tissue distribution, expressed in the whole plant.

Its subcellular location is the nucleus. In terms of biological role, auxin response factors (ARFs) are transcriptional factors that bind specifically to the DNA sequence 5'-TGTCTC-3' found in the auxin-responsive promoter elements (AuxREs). Could act as transcriptional activator or repressor. Formation of heterodimers with Aux/IAA proteins may alter their ability to modulate early auxin response genes expression. The protein is Auxin response factor 4 (ARF4) of Arabidopsis thaliana (Mouse-ear cress).